The sequence spans 209 residues: Small ribosomal subunit protein uS4 (209 aa).

The region spanning Arg99–Lys162 is the S4 RNA-binding domain.

This sequence belongs to the universal ribosomal protein uS4 family. Part of the 30S ribosomal subunit. Contacts protein S5. The interaction surface between S4 and S5 is involved in control of translational fidelity.

Its function is as follows. One of the primary rRNA binding proteins, it binds directly to 16S rRNA where it nucleates assembly of the body of the 30S subunit. Functionally, with S5 and S12 plays an important role in translational accuracy. The sequence is that of Small ribosomal subunit protein uS4 from Syntrophomonas wolfei subsp. wolfei (strain DSM 2245B / Goettingen).